A 177-amino-acid polypeptide reads, in one-letter code: Large ribosomal subunit protein uL6 (177 aa).

This sequence belongs to the universal ribosomal protein uL6 family. As to quaternary structure, part of the 50S ribosomal subunit.

In terms of biological role, this protein binds to the 23S rRNA, and is important in its secondary structure. It is located near the subunit interface in the base of the L7/L12 stalk, and near the tRNA binding site of the peptidyltransferase center. The chain is Large ribosomal subunit protein uL6 from Ruegeria pomeroyi (strain ATCC 700808 / DSM 15171 / DSS-3) (Silicibacter pomeroyi).